A 189-amino-acid polypeptide reads, in one-letter code: Ribosomal RNA large subunit methyltransferase E (189 aa).

The S-adenosyl-L-methionine site is built by Gly-45, Phe-47, Asp-64, Asp-82, and Asp-104. Residue Lys-144 is the Proton acceptor of the active site.

The protein belongs to the class I-like SAM-binding methyltransferase superfamily. RNA methyltransferase RlmE family.

It localises to the cytoplasm. It carries out the reaction uridine(2552) in 23S rRNA + S-adenosyl-L-methionine = 2'-O-methyluridine(2552) in 23S rRNA + S-adenosyl-L-homocysteine + H(+). Specifically methylates the uridine in position 2552 of 23S rRNA at the 2'-O position of the ribose in the fully assembled 50S ribosomal subunit. In Borreliella afzelii (strain PKo) (Borrelia afzelii), this protein is Ribosomal RNA large subunit methyltransferase E.